The sequence spans 219 residues: Ribose-5-phosphate isomerase A (219 aa).

Substrate contacts are provided by residues 28–31, 81–84, and 94–97; these read TGST, DGAD, and KGGG. Glu-103 functions as the Proton acceptor in the catalytic mechanism. Lys-121 serves as a coordination point for substrate.

Belongs to the ribose 5-phosphate isomerase family. In terms of assembly, homodimer.

The catalysed reaction is aldehydo-D-ribose 5-phosphate = D-ribulose 5-phosphate. It participates in carbohydrate degradation; pentose phosphate pathway; D-ribose 5-phosphate from D-ribulose 5-phosphate (non-oxidative stage): step 1/1. Its function is as follows. Catalyzes the reversible conversion of ribose-5-phosphate to ribulose 5-phosphate. In Salmonella choleraesuis (strain SC-B67), this protein is Ribose-5-phosphate isomerase A.